Consider the following 348-residue polypeptide: UDP-glucose 4-epimerase (348 aa).

NAD(+) is bound by residues 12 to 14 (GYI), 33 to 37 (DNFHN), 66 to 67 (DI), Phe-88, and Lys-92. 132 to 134 (SAT) contributes to the substrate binding site. Residue Tyr-157 is the Proton acceptor of the active site. NAD(+)-binding residues include Lys-161 and Tyr-185. Substrate is bound by residues 185-187 (YFN), 206-208 (NNL), 224-226 (NVF), Arg-239, and 300-303 (REGD).

The protein belongs to the NAD(P)-dependent epimerase/dehydratase family. As to quaternary structure, homodimer. Requires NAD(+) as cofactor.

The catalysed reaction is UDP-alpha-D-glucose = UDP-alpha-D-galactose. It catalyses the reaction UDP-N-acetyl-alpha-D-glucosamine = UDP-N-acetyl-alpha-D-galactosamine. The protein operates within carbohydrate metabolism; galactose metabolism. Its function is as follows. Catalyzes two distinct but analogous reactions: the reversible epimerization of UDP-glucose to UDP-galactose and the reversible epimerization of UDP-N-acetylglucosamine to UDP-N-acetylgalactosamine. The reaction with UDP-Gal plays a critical role in the Leloir pathway of galactose catabolism in which galactose is converted to the glycolytic intermediate glucose 6-phosphate. It contributes to the catabolism of dietary galactose and enables the endogenous biosynthesis of both UDP-Gal and UDP-GalNAc when exogenous sources are limited. Both UDP-sugar interconversions are important in the synthesis of glycoproteins and glycolipids. This Pongo abelii (Sumatran orangutan) protein is UDP-glucose 4-epimerase (GALE).